Consider the following 434-residue polypeptide: 4-hydroxy-3-methylbut-2-en-1-yl diphosphate synthase (flavodoxin) (434 aa).

Polar residues predominate over residues 1 to 15 (MQSEAQSPRSSQICS). Residues 1–20 (MQSEAQSPRSSQICSTEPVF) are disordered. Residues cysteine 322, cysteine 325, cysteine 368, and glutamate 375 each coordinate [4Fe-4S] cluster.

Belongs to the IspG family. [4Fe-4S] cluster is required as a cofactor.

The enzyme catalyses (2E)-4-hydroxy-3-methylbut-2-enyl diphosphate + oxidized [flavodoxin] + H2O + 2 H(+) = 2-C-methyl-D-erythritol 2,4-cyclic diphosphate + reduced [flavodoxin]. It functions in the pathway isoprenoid biosynthesis; isopentenyl diphosphate biosynthesis via DXP pathway; isopentenyl diphosphate from 1-deoxy-D-xylulose 5-phosphate: step 5/6. In terms of biological role, converts 2C-methyl-D-erythritol 2,4-cyclodiphosphate (ME-2,4cPP) into 1-hydroxy-2-methyl-2-(E)-butenyl 4-diphosphate. This is 4-hydroxy-3-methylbut-2-en-1-yl diphosphate synthase (flavodoxin) from Burkholderia mallei (strain ATCC 23344).